The following is a 118-amino-acid chain: Large ribosomal subunit protein uL18 (118 aa).

This sequence belongs to the universal ribosomal protein uL18 family. As to quaternary structure, part of the 50S ribosomal subunit; part of the 5S rRNA/L5/L18/L25 subcomplex. Contacts the 5S and 23S rRNAs.

This is one of the proteins that bind and probably mediate the attachment of the 5S RNA into the large ribosomal subunit, where it forms part of the central protuberance. The sequence is that of Large ribosomal subunit protein uL18 from Rickettsia canadensis (strain McKiel).